A 477-amino-acid polypeptide reads, in one-letter code: uncharacterized protein (477 aa).

The chain crosses the membrane as a helical span at residues 107-129 (VNFWSLSMACASVLALLGLVYLI).

The protein localises to the membrane. This is an uncharacterized protein from Treponema pallidum (strain Nichols).